The primary structure comprises 934 residues: LPS-assembly protein LptD (934 aa).

The signal sequence occupies residues 1-33 (MALKSPAFRRKFPLLVTGGLLALQPFATSYVVA). Residues 52-86 (KSPVNNLPPRPVHDGAALTSGTEAPSAEAESADKP) are disordered.

This sequence belongs to the LptD family. As to quaternary structure, component of the lipopolysaccharide transport and assembly complex. Interacts with LptE and LptA.

It is found in the cell outer membrane. Functionally, together with LptE, is involved in the assembly of lipopolysaccharide (LPS) at the surface of the outer membrane. This chain is LPS-assembly protein LptD, found in Pseudomonas putida (strain W619).